A 108-amino-acid chain; its full sequence is DNA-binding protein HBbu (108 aa).

The protein belongs to the bacterial histone-like protein family.

In terms of biological role, histone-like DNA-binding protein which is capable of wrapping DNA to stabilize it, and thus to prevent its denaturation under extreme environmental conditions. The protein is DNA-binding protein HBbu (hbb) of Borrelia parkeri.